Reading from the N-terminus, the 317-residue chain is Melanocyte-stimulating hormone receptor (317 aa).

At 1-37 (MPMQGAQRRLLGSLNSIPTATPNLGLAANHTGAPCLE) the chain is on the extracellular side. Residue Asn29 is glycosylated (N-linked (GlcNAc...) asparagine). Residues 38 to 63 (VSIPDWLFLSLGLVSLVQNVLVVAAI) traverse the membrane as a helical segment. The Cytoplasmic segment spans residues 64–72 (AKNRNLHSP). A helical transmembrane segment spans residues 73–93 (MYCFICCLALSDLLVSGSNML). Topologically, residues 94 to 118 (ETAVILMLEAGALATRASVVQQLQN) are extracellular. A helical transmembrane segment spans residues 119–140 (TIDVLTCSSMLCSLCFLGAIAL). At 141–163 (DRYVSIFYALRYHSIVTLPRARR) the chain is on the cytoplasmic side. A helical transmembrane segment spans residues 164–183 (AIAATWVASVLSSTLFIAYC). Topologically, residues 184–191 (DHAAVLLC) are extracellular. A helical transmembrane segment spans residues 192–211 (LVVFFLAMLVLMAVLYVHML). At 212-240 (ARACQHAQGITRLHKRQLPAHQGFGLRGA) the chain is on the cytoplasmic side. A helical transmembrane segment spans residues 241 to 266 (ATLTILLGIFFLCWGPFFLHLMLVVL). The Extracellular segment spans residues 267 to 279 (CPQHLTCSCIFKN). The helical transmembrane segment at 280–300 (FKVFLTLIICNTIIDPLIYAF) threads the bilayer. At 301 to 317 (RSQELCRTLKEVLLCSW) the chain is on the cytoplasmic side. Cys315 carries S-palmitoyl cysteine lipidation.

Belongs to the G-protein coupled receptor 1 family. In terms of assembly, interacts with MGRN1, but does not undergo MGRN1-mediated ubiquitination; this interaction competes with GNAS-binding and thus inhibits agonist-induced cAMP production. Interacts with OPN3; the interaction results in a decrease in MC1R-mediated cAMP signaling and ultimately a decrease in melanin production in melanocytes.

Its subcellular location is the cell membrane. In terms of biological role, receptor for MSH (alpha, beta and gamma) and ACTH. The activity of this receptor is mediated by G proteins which activate adenylate cyclase. Mediates melanogenesis, the production of eumelanin (black/brown) and phaeomelanin (red/yellow), via regulation of cAMP signaling in melanocytes. The chain is Melanocyte-stimulating hormone receptor (MC1R) from Alouatta seniculus (Red howler monkey).